We begin with the raw amino-acid sequence, 120 residues long: Large ribosomal subunit protein uL18 (120 aa).

Residues 1–10 are compositionally biased toward basic and acidic residues; sequence MKLNRVESTR. Positions 1–26 are disordered; it reads MKLNRVESTRSRHRRVRRKVGGTGDR. The segment covering 11–20 has biased composition (basic residues); the sequence is SRHRRVRRKV.

Belongs to the universal ribosomal protein uL18 family. As to quaternary structure, part of the 50S ribosomal subunit; part of the 5S rRNA/L5/L18/L25 subcomplex. Contacts the 5S and 23S rRNAs.

This is one of the proteins that bind and probably mediate the attachment of the 5S RNA into the large ribosomal subunit, where it forms part of the central protuberance. The chain is Large ribosomal subunit protein uL18 from Cyanothece sp. (strain PCC 7425 / ATCC 29141).